The chain runs to 313 residues: Small ribosomal subunit protein uS2 (313 aa).

Residues Arg233–Lys256 are compositionally biased toward basic and acidic residues. Residues Arg233–Ala293 form a disordered region.

This sequence belongs to the universal ribosomal protein uS2 family.

The protein is Small ribosomal subunit protein uS2 of Bdellovibrio bacteriovorus (strain ATCC 15356 / DSM 50701 / NCIMB 9529 / HD100).